The sequence spans 251 residues: MQYKYLLEYNKKNHECNPCHVAIIMDGNGRWATRQGKIRIMGHKEGFRAVKEAIKFSIANNLKILTLYAFSSENWNRPLFEIKALMELFLFALDTEIKNLKKHNIRFKVIGDITCFDKKLQNSIHYAEQITFDNTGLILNIAANYGGRWDIIESVKKIINRVQRGILDVNKIHENTISQYLSTSELLPVDLVIRTGGEKRISNFLLWQIAYSELYFTDVLWPDFNCHIFQHAIDSFVSRERRFGGFKKNKK.

The active site involves Asp-26. Residue Asp-26 coordinates Mg(2+). Residues 27–30, Trp-31, Arg-39, His-43, and 71–73 each bind substrate; these read GNGR and SSE. Asn-74 acts as the Proton acceptor in catalysis. Substrate-binding positions include Trp-75, Arg-77, Arg-194, and 200–202; that span reads RIS. Glu-213 contacts Mg(2+).

Belongs to the UPP synthase family. In terms of assembly, homodimer. Requires Mg(2+) as cofactor.

The catalysed reaction is 8 isopentenyl diphosphate + (2E,6E)-farnesyl diphosphate = di-trans,octa-cis-undecaprenyl diphosphate + 8 diphosphate. Functionally, catalyzes the sequential condensation of isopentenyl diphosphate (IPP) with (2E,6E)-farnesyl diphosphate (E,E-FPP) to yield (2Z,6Z,10Z,14Z,18Z,22Z,26Z,30Z,34E,38E)-undecaprenyl diphosphate (di-trans,octa-cis-UPP). UPP is the precursor of glycosyl carrier lipid in the biosynthesis of bacterial cell wall polysaccharide components such as peptidoglycan and lipopolysaccharide. The polypeptide is Ditrans,polycis-undecaprenyl-diphosphate synthase ((2E,6E)-farnesyl-diphosphate specific) (Buchnera aphidicola subsp. Acyrthosiphon pisum (strain APS) (Acyrthosiphon pisum symbiotic bacterium)).